The sequence spans 584 residues: Protein disulfide-isomerase-like protein of the testis (584 aa).

The first 20 residues, methionine 1 to serine 20, serve as a signal peptide directing secretion. N-linked (GlcNAc...) asparagine glycans are attached at residues asparagine 58, asparagine 128, asparagine 160, and asparagine 340. A Thioredoxin domain is found at leucine 388–aspartate 451. Asparagine 540 carries N-linked (GlcNAc...) asparagine glycosylation. The short motif at lysine 581 to leucine 584 is the Prevents secretion from ER element.

Belongs to the protein disulfide isomerase family. As to quaternary structure, homodimer. The homodimer is not disulfide-linked. Interacts with ERO1A and CLGN. In terms of processing, N-glycosylated. As to expression, testis-specific.

Its subcellular location is the endoplasmic reticulum. Its function is as follows. Probable redox-inactive chaperone involved in spermatogenesis. This chain is Protein disulfide-isomerase-like protein of the testis (PDILT), found in Homo sapiens (Human).